The sequence spans 177 residues: Probable inosine/xanthosine triphosphatase (177 aa).

Belongs to the YjjX NTPase family. In terms of assembly, homodimer. It depends on Mg(2+) as a cofactor. Mn(2+) is required as a cofactor.

It catalyses the reaction XTP + H2O = XDP + phosphate + H(+). It carries out the reaction ITP + H2O = IDP + phosphate + H(+). Functionally, phosphatase that hydrolyzes non-canonical purine nucleotides such as XTP and ITP to their respective diphosphate derivatives. Probably excludes non-canonical purines from DNA/RNA precursor pool, thus preventing their incorporation into DNA/RNA and avoiding chromosomal lesions. The sequence is that of Probable inosine/xanthosine triphosphatase from Pyrobaculum islandicum (strain DSM 4184 / JCM 9189 / GEO3).